The following is a 478-amino-acid chain: Protein nucleotidyltransferase YdiU (478 aa).

ATP is bound by residues Gly-84, Gly-86, Arg-87, Lys-107, Asp-119, Gly-120, Arg-170, and Arg-177. The active-site Proton acceptor is Asp-246. The Mg(2+) site is built by Asn-247 and Asp-256. Residue Asp-256 coordinates ATP.

It belongs to the SELO family. Requires Mg(2+) as cofactor. Mn(2+) is required as a cofactor.

It carries out the reaction L-seryl-[protein] + ATP = 3-O-(5'-adenylyl)-L-seryl-[protein] + diphosphate. It catalyses the reaction L-threonyl-[protein] + ATP = 3-O-(5'-adenylyl)-L-threonyl-[protein] + diphosphate. The enzyme catalyses L-tyrosyl-[protein] + ATP = O-(5'-adenylyl)-L-tyrosyl-[protein] + diphosphate. The catalysed reaction is L-histidyl-[protein] + UTP = N(tele)-(5'-uridylyl)-L-histidyl-[protein] + diphosphate. It carries out the reaction L-seryl-[protein] + UTP = O-(5'-uridylyl)-L-seryl-[protein] + diphosphate. It catalyses the reaction L-tyrosyl-[protein] + UTP = O-(5'-uridylyl)-L-tyrosyl-[protein] + diphosphate. Its function is as follows. Nucleotidyltransferase involved in the post-translational modification of proteins. It can catalyze the addition of adenosine monophosphate (AMP) or uridine monophosphate (UMP) to a protein, resulting in modifications known as AMPylation and UMPylation. In Escherichia coli O7:K1 (strain IAI39 / ExPEC), this protein is Protein nucleotidyltransferase YdiU.